The following is a 341-amino-acid chain: NADH-ubiquinone oxidoreductase chain 2 (341 aa).

8 helical membrane-spanning segments follow: residues 8–28, 61–81, 95–117, 145–165, 195–215, 238–258, 266–286, and 320–340; these read IFFIMLISGTLITISSNSWLG, FLTQAFASSILLFAIILMMMF, LLILSTLLLKSGAAPFHFWFPGV, LNINFFYFTILLSMIIGALGG, LLWLTYFLLYSILSMSIILMF, FFMFLNLLSLGGLPPFLGFLP, LVEMNQLFLLFIAVCLTLITL, and ILTMNFISIMGLLIITLIYLI.

Belongs to the complex I subunit 2 family.

The protein resides in the mitochondrion inner membrane. It catalyses the reaction a ubiquinone + NADH + 5 H(+)(in) = a ubiquinol + NAD(+) + 4 H(+)(out). Its function is as follows. Core subunit of the mitochondrial membrane respiratory chain NADH dehydrogenase (Complex I) that is believed to belong to the minimal assembly required for catalysis. Complex I functions in the transfer of electrons from NADH to the respiratory chain. The immediate electron acceptor for the enzyme is believed to be ubiquinone. This Aedes aegypti (Yellowfever mosquito) protein is NADH-ubiquinone oxidoreductase chain 2.